The primary structure comprises 118 residues: Small ribosomal subunit protein uS19c (118 aa).

The segment at 92-118 (KKSSKKVTKNKKSIKKNIKTTSKKFKK) is disordered.

Belongs to the universal ribosomal protein uS19 family.

It localises to the plastid. In terms of biological role, protein S19 forms a complex with S13 that binds strongly to the 16S ribosomal RNA. This Euglena longa (Euglenophycean alga) protein is Small ribosomal subunit protein uS19c (rps19).